A 453-amino-acid chain; its full sequence is Nuclear hormone receptor family member nhr-12 (453 aa).

Positions 1–37 (MEQIPQEQKTEPFLASFTTTEKLGTETPTTSITPNTQ) are disordered. A compositionally biased stretch (low complexity) spans 18–36 (TTTEKLGTETPTTSITPNT). A DNA-binding region (nuclear receptor) is located at residues 44–119 (KPNCAVCNEV…VGMNPECVQN (76 aa)). 2 consecutive NR C4-type zinc fingers follow at residues 47–67 (CAVC…CRAC) and 83–107 (CRAG…YDKC). Residues 178-451 (FSPASLPGLS…ENFVNIINGK (274 aa)) enclose the NR LBD domain.

Belongs to the nuclear hormone receptor family.

The protein localises to the nucleus. Orphan nuclear receptor. In Caenorhabditis elegans, this protein is Nuclear hormone receptor family member nhr-12 (nhr-12).